Consider the following 102-residue polypeptide: NADH-quinone oxidoreductase subunit K (102 aa).

The next 3 helical transmembrane spans lie at 5–25 (LGHY…GIFL), 30–50 (IIVI…NLVA), and 62–82 (VFAL…LAVL).

Belongs to the complex I subunit 4L family. NDH-1 is composed of 14 different subunits. Subunits NuoA, H, J, K, L, M, N constitute the membrane sector of the complex.

It is found in the cell inner membrane. The catalysed reaction is a quinone + NADH + 5 H(+)(in) = a quinol + NAD(+) + 4 H(+)(out). NDH-1 shuttles electrons from NADH, via FMN and iron-sulfur (Fe-S) centers, to quinones in the respiratory chain. The immediate electron acceptor for the enzyme in this species is believed to be ubiquinone. Couples the redox reaction to proton translocation (for every two electrons transferred, four hydrogen ions are translocated across the cytoplasmic membrane), and thus conserves the redox energy in a proton gradient. The sequence is that of NADH-quinone oxidoreductase subunit K from Bradyrhizobium sp. (strain BTAi1 / ATCC BAA-1182).